A 290-amino-acid polypeptide reads, in one-letter code: Small ribosomal subunit biogenesis GTPase RsgA (290 aa).

Positions 63–220 (KNELIRPPIA…IADTPGFSNL (158 aa)) constitute a CP-type G domain. GTP contacts are provided by residues 112–115 (NKFD) and 162–170 (GPSGVGKST). 4 residues coordinate Zn(2+): cysteine 244, cysteine 249, histidine 251, and cysteine 257.

This sequence belongs to the TRAFAC class YlqF/YawG GTPase family. RsgA subfamily. In terms of assembly, monomer. Associates with 30S ribosomal subunit, binds 16S rRNA. Zn(2+) is required as a cofactor.

It is found in the cytoplasm. Functionally, one of several proteins that assist in the late maturation steps of the functional core of the 30S ribosomal subunit. Helps release RbfA from mature subunits. May play a role in the assembly of ribosomal proteins into the subunit. Circularly permuted GTPase that catalyzes slow GTP hydrolysis, GTPase activity is stimulated by the 30S ribosomal subunit. This is Small ribosomal subunit biogenesis GTPase RsgA from Carboxydothermus hydrogenoformans (strain ATCC BAA-161 / DSM 6008 / Z-2901).